Reading from the N-terminus, the 668-residue chain is DNA ligase (668 aa).

Residues 32–36, 81–82, and Glu-113 each bind NAD(+); these read DAEYD and SL. Lys-115 acts as the N6-AMP-lysine intermediate in catalysis. Arg-136, Glu-173, Lys-289, and Lys-313 together coordinate NAD(+). Zn(2+)-binding residues include Cys-407, Cys-410, Cys-425, and Cys-431. The BRCT domain occupies 590–668; the sequence is ASEQPFAGKT…EEELQQALQG (79 aa).

The protein belongs to the NAD-dependent DNA ligase family. LigA subfamily. Mg(2+) is required as a cofactor. Mn(2+) serves as cofactor.

The catalysed reaction is NAD(+) + (deoxyribonucleotide)n-3'-hydroxyl + 5'-phospho-(deoxyribonucleotide)m = (deoxyribonucleotide)n+m + AMP + beta-nicotinamide D-nucleotide.. DNA ligase that catalyzes the formation of phosphodiester linkages between 5'-phosphoryl and 3'-hydroxyl groups in double-stranded DNA using NAD as a coenzyme and as the energy source for the reaction. It is essential for DNA replication and repair of damaged DNA. This is DNA ligase from Aeromonas hydrophila subsp. hydrophila (strain ATCC 7966 / DSM 30187 / BCRC 13018 / CCUG 14551 / JCM 1027 / KCTC 2358 / NCIMB 9240 / NCTC 8049).